Consider the following 536-residue polypeptide: Protein Rep68 (536 aa).

The PV NS1-Nuc domain occupies 1–199 (MPGFYEIVIK…AQHLTHVSQT (199 aa)). Residues glutamate 83, histidine 90, and histidine 92 each contribute to the a divalent metal cation site. An RCR-2 motif is present at residues 90-92 (HMH). Catalysis depends on tyrosine 156, which acts as the For nuclease activity. An RCR-3 motif is present at residues 156–160 (YLLPK). Residues 196 to 211 (VSQTQEQNKENQNPNS) are compositionally biased toward polar residues. The interval 196–216 (VSQTQEQNKENQNPNSDAPVI) is disordered. Residues 308 to 463 (DPQYAASVFL…LDHDFGKVTK (156 aa)) form the SF3 helicase domain. ATP is bound at residue 334-341 (GPATTGKT). A disordered region spans residues 488-536 (KGGAKKRPAPSDADISEPKRVRESVAQPSTSDAEASINYADRLARGHSL).

As to quaternary structure, interacts with host TOPORS. Interacts with host KCTD5. The cofactor is a divalent metal cation.

Its subcellular location is the host nucleus. The enzyme catalyses ATP + H2O = ADP + phosphate + H(+). Plays an essential role in the initiation of viral DNA synthesis. Binds specifically to an inverted terminal repeat element (ITR) on the 3' and 5' ends of the viral DNA, where it cleaves a site specifically to generate a priming site for initiation of the synthesis of a complementary strand. Also plays a role as transcriptional regulator, DNA helicase and as key factor in site-specific integration of the viral genome. Inhibits the host cell cycle G1/S and G2/M transitions. These arrests may provide essential cellular factors for viral DNA replication. The sequence is that of Protein Rep68 (Rep68) from Mammalia (AAV-2).